A 367-amino-acid polypeptide reads, in one-letter code: UDP-N-acetylenolpyruvoylglucosamine reductase (367 aa).

The FAD-binding PCMH-type domain occupies V29–S205. Residue R177 is part of the active site. S260 acts as the Proton donor in catalysis. E359 is a catalytic residue.

The protein belongs to the MurB family. FAD is required as a cofactor.

The protein localises to the cytoplasm. It catalyses the reaction UDP-N-acetyl-alpha-D-muramate + NADP(+) = UDP-N-acetyl-3-O-(1-carboxyvinyl)-alpha-D-glucosamine + NADPH + H(+). It functions in the pathway cell wall biogenesis; peptidoglycan biosynthesis. Functionally, cell wall formation. The protein is UDP-N-acetylenolpyruvoylglucosamine reductase of Mycobacterium leprae (strain Br4923).